Reading from the N-terminus, the 257-residue chain is Imidazole glycerol phosphate synthase subunit HisF (257 aa).

Catalysis depends on residues Asp12 and Asp131.

The protein belongs to the HisA/HisF family. Heterodimer of HisH and HisF.

Its subcellular location is the cytoplasm. The enzyme catalyses 5-[(5-phospho-1-deoxy-D-ribulos-1-ylimino)methylamino]-1-(5-phospho-beta-D-ribosyl)imidazole-4-carboxamide + L-glutamine = D-erythro-1-(imidazol-4-yl)glycerol 3-phosphate + 5-amino-1-(5-phospho-beta-D-ribosyl)imidazole-4-carboxamide + L-glutamate + H(+). It participates in amino-acid biosynthesis; L-histidine biosynthesis; L-histidine from 5-phospho-alpha-D-ribose 1-diphosphate: step 5/9. Functionally, IGPS catalyzes the conversion of PRFAR and glutamine to IGP, AICAR and glutamate. The HisF subunit catalyzes the cyclization activity that produces IGP and AICAR from PRFAR using the ammonia provided by the HisH subunit. The chain is Imidazole glycerol phosphate synthase subunit HisF from Paraburkholderia phymatum (strain DSM 17167 / CIP 108236 / LMG 21445 / STM815) (Burkholderia phymatum).